The primary structure comprises 354 residues: ATP-dependent (S)-NAD(P)H-hydrate dehydratase (354 aa).

The 309-residue stretch at 42–350 folds into the YjeF C-terminal domain; it reads AENILRAITP…ECLGRSLEDI (309 aa). (6S)-NADPHX contacts are provided by residues glycine 155 and 208–214; that span reads NVNEYKR. ATP is bound by residues 248–252 and 267–276; these read KGKSD and GSPRRCGGQG. Aspartate 277 contacts (6S)-NADPHX.

It belongs to the NnrD/CARKD family. It depends on Mg(2+) as a cofactor.

It catalyses the reaction (6S)-NADHX + ATP = ADP + phosphate + NADH + H(+). The enzyme catalyses (6S)-NADPHX + ATP = ADP + phosphate + NADPH + H(+). Functionally, catalyzes the dehydration of the S-form of NAD(P)HX at the expense of ATP, which is converted to ADP. Together with NAD(P)HX epimerase, which catalyzes the epimerization of the S- and R-forms, the enzyme allows the repair of both epimers of NAD(P)HX, a damaged form of NAD(P)H that is a result of enzymatic or heat-dependent hydration. The sequence is that of ATP-dependent (S)-NAD(P)H-hydrate dehydratase from Vitis vinifera (Grape).